We begin with the raw amino-acid sequence, 487 residues long: Betaine aldehyde dehydrogenase (487 aa).

Ile-27 and Asp-93 together coordinate K(+). Position 149–151 (149–151 (GAW)) interacts with NAD(+). The active-site Charge relay system is the Lys-161. NAD(+) is bound by residues 175 to 178 (KPSE) and 228 to 231 (SVPT). A K(+)-binding site is contributed by Leu-243. Catalysis depends on Glu-249, which acts as the Proton acceptor. NAD(+) contacts are provided by Gly-251, Cys-283, and Glu-384. The Nucleophile role is filled by Cys-283. Residue Cys-283 is modified to Cysteine sulfenic acid (-SOH). K(+) is bound by residues Lys-454 and Gly-457. The active-site Charge relay system is the Glu-461.

This sequence belongs to the aldehyde dehydrogenase family. In terms of assembly, dimer of dimers. It depends on K(+) as a cofactor.

The catalysed reaction is betaine aldehyde + NAD(+) + H2O = glycine betaine + NADH + 2 H(+). It functions in the pathway amine and polyamine biosynthesis; betaine biosynthesis via choline pathway; betaine from betaine aldehyde: step 1/1. Involved in the biosynthesis of the osmoprotectant glycine betaine. Catalyzes the irreversible oxidation of betaine aldehyde to the corresponding acid. This Brucella melitensis biotype 2 (strain ATCC 23457) protein is Betaine aldehyde dehydrogenase.